Consider the following 316-residue polypeptide: Glutathione synthetase (316 aa).

An ATP-grasp domain is found at 123-309; the sequence is NEKISTLSFK…ISGILLDSIE (187 aa). Residue 149-206 coordinates ATP; sequence FQEKFGDIILKPINKMGGDSVFYVKKNDPNVSVIIDQLTNYGNSFCLIQEYIKEILNG. Positions 280 and 282 each coordinate Mg(2+).

The protein belongs to the prokaryotic GSH synthase family. Mg(2+) serves as cofactor. It depends on Mn(2+) as a cofactor.

The catalysed reaction is gamma-L-glutamyl-L-cysteine + glycine + ATP = glutathione + ADP + phosphate + H(+). Its pathway is sulfur metabolism; glutathione biosynthesis; glutathione from L-cysteine and L-glutamate: step 2/2. The sequence is that of Glutathione synthetase from Wigglesworthia glossinidia brevipalpis.